The primary structure comprises 701 residues: Glycine--tRNA ligase beta subunit (701 aa).

It belongs to the class-II aminoacyl-tRNA synthetase family. Tetramer of two alpha and two beta subunits.

Its subcellular location is the cytoplasm. The enzyme catalyses tRNA(Gly) + glycine + ATP = glycyl-tRNA(Gly) + AMP + diphosphate. The chain is Glycine--tRNA ligase beta subunit from Anaeromyxobacter dehalogenans (strain 2CP-C).